The primary structure comprises 216 residues: MREMNQLVNTEDSAWPIIQNWLKDATNHTELLPVNKDLAETALYQLQVTTKSPMGALVYGSGGLLIDNGXLRIAGSGHPRLPRDPVSWTQRPEFAGVRALPIADDVAGVIFALNGGDLGEDTGCVYYFAPDTLNWESLEVGYSEFLQWALSGDLDTFYENVRWQQWREDVIKLSATEAFTFYPFLWVQSEEARTRKVISLTELWEMQYQMKETFTQ.

This is an uncharacterized protein from Escherichia coli (strain K12).